We begin with the raw amino-acid sequence, 590 residues long: Multidrug resistance ABC transporter ATP-binding and permease protein (590 aa).

The next 6 helical transmembrane spans lie at Tyr35 to Val55, Ile79 to Phe99, Ile150 to Met170, Leu176 to Gly196, Val261 to Ile281, and Leu292 to Phe312. The ABC transmembrane type-1 domain occupies Phe38–Lys317. Residues Leu349 to Glu584 form the ABC transporter domain. Gly382–Ser389 serves as a coordination point for ATP.

The protein belongs to the ABC transporter superfamily. Multidrug exporter LmrA (TC 3.A.1.117.1) family. Homodimer.

It localises to the cell membrane. The catalysed reaction is ATP + H2O + xenobioticSide 1 = ADP + phosphate + xenobioticSide 2.. Efflux transporter for a variety of amphiphilic cationic compounds, including antibiotics. In Lactococcus lactis subsp. cremoris (strain MG1363), this protein is Multidrug resistance ABC transporter ATP-binding and permease protein (lmrA).